The chain runs to 329 residues: Minor capsid protein A1 (329 aa).

The protein resides in the virion. Minor capsid protein. The protein is Minor capsid protein A1 of Escherichia coli (Bacteriophage Q-beta).